Reading from the N-terminus, the 131-residue chain is MVYESGFTTRRTYSSRPVTTSYAVTTPRLDLCTDRPGSHRSRASSDYSYTSKSSVEKSSYDSSNPHSYRPERSTYTSTVEKTSRSGPGGSYNYSTERTSTTGAGPGGYSYSSTTSGNLPGGTKYRHFSYHV.

Over residues 1–24 (MVYESGFTTRRTYSSRPVTTSYAV) the composition is skewed to polar residues. The segment at 1-121 (MVYESGFTTR…STTSGNLPGG (121 aa)) is disordered. Composition is skewed to low complexity over residues 44-53 (SSDYSYTSKS) and 98-116 (TSTTGAGPGGYSYSSTTSG).

Concentrated in lamina neurons, first optic lobe neurons and cortical neurons of central brain.

Functionally, plays an important role in the regulation of tissue responsiveness to oxygen deprivation. The sequence is that of Protein anoxia up-regulated from Drosophila melanogaster (Fruit fly).